The following is a 122-amino-acid chain: uncharacterized protein (122 aa).

This is an uncharacterized protein from Aquifex aeolicus (strain VF5).